The following is a 245-amino-acid chain: Bax inhibitor 1 (245 aa).

Topologically, residues 1-30 (MADTANYINDRFQTFMNGLGDRYEPYVREH) are cytoplasmic. The chain crosses the membrane as a helical span at residues 31-51 (LSKVYMVLGSTAAATAMGAML). Residues 52–55 (QMRD) lie on the Lumenal side of the membrane. Residues 56-76 (FLDLGVLAAVATLVLVLGLHF) form a helical membrane-spanning segment. Residues 77–88 (YKDDGKNYYTRL) are Cytoplasmic-facing. The helical transmembrane segment at 89–109 (GMLYAFGFCSGQTLGPLLGYI) threads the bilayer. Over 110 to 115 (CSINPA) the chain is Lumenal. The chain crosses the membrane as a helical span at residues 116 to 136 (IILSALTGTFVTFISLSLSAL). The Cytoplasmic segment spans residues 137 to 142 (LAEQGK). The helical transmembrane segment at 143–163 (YLYLGGMLVSVINTMALLSLF) threads the bilayer. The Lumenal portion of the chain corresponds to 164–169 (NMVFKS). A helical transmembrane segment spans residues 170–190 (YFVQVTQLYVGVFVMAAFIVY). Over 191–245 (DTQNIVEKCRNGNRDVVQHALDLFFDVLSMFRRLLIILTQKEERKQNERRQNKTK) the chain is Cytoplasmic.

It belongs to the BI1 family.

It is found in the endoplasmic reticulum membrane. Its function is as follows. Suppressor of apoptosis. Modulates unfolded protein response signaling. Negatively regulates autophagy and autophagosome formation, especially during periods of nutrient deprivation, and reduces cell survival during starvation. The chain is Bax inhibitor 1 from Drosophila melanogaster (Fruit fly).